The primary structure comprises 427 residues: Homeobox protein knotted-1-like 3 (427 aa).

Disordered stretches follow at residues 19–49 and 272–291; these read QTHHQHQQYQSDQPDPNSKPPEPHHSFQPAP and TGVSPGEGTSATMSDDEDDQ. Residues 272–284 are compositionally biased toward polar residues; sequence TGVSPGEGTSATM. In terms of domain architecture, ELK spans 330 to 350; that stretch reads ELKHELKQGYKEKIVDIREEI. The segment at residues 351–414 is a DNA-binding region (homeobox; TALE-type); sequence LRKRRAGKLP…NQRKRNWHSN (64 aa).

The protein belongs to the TALE/KNOX homeobox family. Maximally expressed in sepals, petals and fully expanded leaves. Also expressed in other flower organs and in developing leaves. Low level expression in stem internodes.

It localises to the nucleus. The protein is Homeobox protein knotted-1-like 3 of Malus domestica (Apple).